The chain runs to 34 residues: Photosystem II reaction center protein Psb30 (34 aa).

The chain crosses the membrane as a helical span at residues 6-26; the sequence is VIGQLTSLAMIVLVGPAVIVV.

The protein belongs to the Psb30/Ycf12 family. As to quaternary structure, PSII is composed of 1 copy each of membrane proteins PsbA, PsbB, PsbC, PsbD, PsbE, PsbF, PsbH, PsbI, PsbJ, PsbK, PsbL, PsbM, PsbT, PsbX, PsbY, PsbZ, Psb30/Ycf12, peripheral proteins of the oxygen-evolving complex and a large number of cofactors. It forms dimeric complexes.

It is found in the plastid. The protein localises to the chloroplast thylakoid membrane. A core subunit of photosystem II (PSII), probably helps stabilize the reaction center. The protein is Photosystem II reaction center protein Psb30 of Gracilaria tenuistipitata var. liui (Red alga).